The following is a 130-amino-acid chain: 3-aminoacrylate deaminase RutC (130 aa).

Belongs to the RutC family.

It catalyses the reaction (Z)-3-aminoacrylate + H2O + H(+) = 3-oxopropanoate + NH4(+). In terms of biological role, involved in pyrimidine catabolism. Catalyzes the deamination of 3-aminoacrylate to malonic semialdehyde, a reaction that can also occur spontaneously. RutC may facilitate the reaction and modulate the metabolic fitness, rather than catalyzing essential functions. This Methylorubrum extorquens (strain CM4 / NCIMB 13688) (Methylobacterium extorquens) protein is 3-aminoacrylate deaminase RutC.